The chain runs to 341 residues: MPIVSWPELLEKLLSTKEISEIEAKALMKAWLNDELLPVQTGAFLTALRAKQISGLELSSMAEVLRDACLFPYPLPEVFMVDTCGTGGDGADTFNISTAVAFVTASCGVTIAKHGNRSASGKVGSADVLEGLGIKLNAPLELVVKAIEKNNITFLFAPAWHSSLINLAPLRKALGVRTVFNLLGPLVNPFRPKAQVLGVAKSELLDPMVEALRNLGLERAVVVHGAGGLDEASLEGPNEVRFLENGQITSKTLDVEELGLTISPNSTLKGGSLATNQDILRSLFQGRGTQSQREVVALNSSLVFWASGKELDLKKGVTIALEAMELSKPLDKFNELKCCLE.

Residues G85, G88–D89, T93, N95–T98, K113–G121, and S125 each bind 5-phospho-alpha-D-ribose 1-diphosphate. G85 contributes to the anthranilate binding site. S97 contributes to the Mg(2+) binding site. An anthranilate-binding site is contributed by N116. Residue R171 participates in anthranilate binding. The Mg(2+) site is built by D230 and E231.

This sequence belongs to the anthranilate phosphoribosyltransferase family. In terms of assembly, homodimer. Requires Mg(2+) as cofactor.

It carries out the reaction N-(5-phospho-beta-D-ribosyl)anthranilate + diphosphate = 5-phospho-alpha-D-ribose 1-diphosphate + anthranilate. Its pathway is amino-acid biosynthesis; L-tryptophan biosynthesis; L-tryptophan from chorismate: step 2/5. Catalyzes the transfer of the phosphoribosyl group of 5-phosphorylribose-1-pyrophosphate (PRPP) to anthranilate to yield N-(5'-phosphoribosyl)-anthranilate (PRA). In Prochlorococcus marinus (strain SARG / CCMP1375 / SS120), this protein is Anthranilate phosphoribosyltransferase.